The primary structure comprises 521 residues: Envelope glycoprotein C homolog (521 aa).

The first 21 residues, 1–21 (MGPLGRAWLIAAIFAWALLSA), serve as a signal peptide directing secretion. Over 22–475 (RRGLAEEAEA…DASPGLIGSP (454 aa)) the chain is Virion surface. A disordered region spans residues 24-138 (GLAEEAEASP…PSKAPPKERK (115 aa)). Low complexity predominate over residues 41 to 54 (PTETESSAGTTGAT). Polar residues predominate over residues 66 to 76 (EDSTPGATTPV). Residue Asn111 is glycosylated (N-linked (GlcNAc...) asparagine; by host). Residues Cys142 and Cys159 are joined by a disulfide bond. The Ig-like V-type domain maps to 155–227 (LYVHCGVADN…LGDNYIFPSP (73 aa)). Asn164 and Asn208 each carry an N-linked (GlcNAc...) asparagine; by host glycan. Cystine bridges form between Cys290–Cys351, Cys390–Cys447, and Cys394–Cys421. Residues 386 to 451 (GEAVCEARCV…PVDYTCTATG (66 aa)) form the Ig-like C2-type domain. A helical membrane pass occupies residues 476–496 (VLVSVVAVACGLGAVGLLLVA). Residues 497-521 (ASCLRRKARVIQPGLTRARALGSAP) are Cytoplasmic-facing.

The protein belongs to the herpesviridae glycoprotein C family. In terms of assembly, interacts with host complement component C3; this interaction inhibits host immune response by disregulating complement cascade.

Its subcellular location is the virion membrane. In terms of biological role, essential for the initial attachment to heparan sulfate moieties of the host cell surface proteoglycans. Plays also a role in host immune evasion by inhibiting the host complement cascade activation. The sequence is that of Envelope glycoprotein C homolog (gC) from Bovine herpesvirus 1.1 (strain Cooper) (BoHV-1).